Reading from the N-terminus, the 66-residue chain is Large ribosomal subunit protein uL29 (66 aa).

Belongs to the universal ribosomal protein uL29 family.

The polypeptide is Large ribosomal subunit protein uL29 (Thermotoga neapolitana (strain ATCC 49049 / DSM 4359 / NBRC 107923 / NS-E)).